Here is a 356-residue protein sequence, read N- to C-terminus: UDP-N-acetylglucosamine--N-acetylmuramyl-(pentapeptide) pyrophosphoryl-undecaprenol N-acetylglucosamine transferase (356 aa).

UDP-N-acetyl-alpha-D-glucosamine-binding positions include 14–16, asparagine 126, arginine 162, serine 190, isoleucine 244, and glutamine 289; that span reads TGG.

The protein belongs to the glycosyltransferase 28 family. MurG subfamily.

Its subcellular location is the cell inner membrane. It carries out the reaction di-trans,octa-cis-undecaprenyl diphospho-N-acetyl-alpha-D-muramoyl-L-alanyl-D-glutamyl-meso-2,6-diaminopimeloyl-D-alanyl-D-alanine + UDP-N-acetyl-alpha-D-glucosamine = di-trans,octa-cis-undecaprenyl diphospho-[N-acetyl-alpha-D-glucosaminyl-(1-&gt;4)]-N-acetyl-alpha-D-muramoyl-L-alanyl-D-glutamyl-meso-2,6-diaminopimeloyl-D-alanyl-D-alanine + UDP + H(+). It participates in cell wall biogenesis; peptidoglycan biosynthesis. Its function is as follows. Cell wall formation. Catalyzes the transfer of a GlcNAc subunit on undecaprenyl-pyrophosphoryl-MurNAc-pentapeptide (lipid intermediate I) to form undecaprenyl-pyrophosphoryl-MurNAc-(pentapeptide)GlcNAc (lipid intermediate II). The sequence is that of UDP-N-acetylglucosamine--N-acetylmuramyl-(pentapeptide) pyrophosphoryl-undecaprenol N-acetylglucosamine transferase from Cupriavidus necator (strain ATCC 17699 / DSM 428 / KCTC 22496 / NCIMB 10442 / H16 / Stanier 337) (Ralstonia eutropha).